The following is a 348-amino-acid chain: Killer cell immunoglobulin-like receptor 2DL2 (348 aa).

The first 21 residues, 1-21 (MSLMVVSMACVGFFLLQGAWP), serve as a signal peptide directing secretion. Residues 22–245 (HEGVHRKPSL…SKTGNPRHLH (224 aa)) lie on the Extracellular side of the membrane. Ig-like C2-type domains lie at 42–107 (EETV…VTHS) and 142–205 (GESV…FRDS). 2 disulfide bridges follow: cysteine 49–cysteine 100 and cysteine 149–cysteine 198. Residues asparagine 84, asparagine 178, and asparagine 211 are each glycosylated (N-linked (GlcNAc...) asparagine). The chain crosses the membrane as a helical span at residues 246–264 (ILIGTSVVIILFILLFFLL). The Cytoplasmic segment spans residues 265–348 (HRWCSNKKNA…ESRSKVVSCP (84 aa)).

The protein belongs to the immunoglobulin superfamily.

Its subcellular location is the cell membrane. Receptor on natural killer (NK) cells for HLA-Cw1, 3, 7, and 8 allotypes. Inhibits the activity of NK cells thus preventing cell lysis. The sequence is that of Killer cell immunoglobulin-like receptor 2DL2 from Homo sapiens (Human).